Consider the following 250-residue polypeptide: Trypsin (250 aa).

An N-terminal signal peptide occupies residues 1-15 (MRLLALLLMVGAAVA). Positions 16–22 (VPREDGR) are cleaved as a propeptide — activation peptide. In terms of domain architecture, Peptidase S1 spans 23 to 247 (IIGGHECAAH…FLGWIERTLE (225 aa)). 6 cysteine pairs are disulfide-bonded: cysteine 29-cysteine 163, cysteine 47-cysteine 63, cysteine 133-cysteine 236, cysteine 140-cysteine 209, cysteine 174-cysteine 188, and cysteine 199-cysteine 223. Catalysis depends on charge relay system residues histidine 62 and aspartate 106. Residue serine 203 is the Charge relay system of the active site.

The protein belongs to the peptidase S1 family.

It localises to the secreted. Its subcellular location is the extracellular space. The enzyme catalyses Preferential cleavage: Arg-|-Xaa, Lys-|-Xaa.. In Pleuronectes platessa (European plaice), this protein is Trypsin.